The primary structure comprises 397 residues: Lysophospholipid transporter LplT (397 aa).

Over 1–17 (MSESVHTNTSLWSKGMK) the chain is Periplasmic. A helical membrane pass occupies residues 18–38 (AVIVAQFLSAFGDNALLFATL). Topologically, residues 39–52 (ALLKAQFYPEWSQP) are cytoplasmic. A helical membrane pass occupies residues 53-73 (ILQMVFVGAYILFAPFVGQVA). The Periplasmic segment spans residues 74–90 (DSFAKGRVMMFANGLKL). The chain crosses the membrane as a helical span at residues 91 to 111 (LGAASICFGINPFLGYTLVGV). The Cytoplasmic portion of the chain corresponds to 112–144 (GAAAYSPAKYGILGELTTGSKLVKANGLMEAST). A helical membrane pass occupies residues 145 to 165 (IAAILLGSVAGGVLADWHVLV). A topological domain (periplasmic) is located at residue A166. A helical transmembrane segment spans residues 167–187 (LAACALAYGGAVVANIYIPKL). The Cytoplasmic segment spans residues 188-226 (AAARPGQSWNLINMTRSFLNACTSLWRNGETRFSLVGTS). A helical transmembrane segment spans residues 227–247 (LFWGAGVTLRFLLVLWVPVAL). The Periplasmic portion of the chain corresponds to 248 to 256 (GITDNATPT). A helical transmembrane segment spans residues 257 to 277 (YLNAMVAIGIVVGAGAAAKLV). Over 278-280 (TLE) the chain is Cytoplasmic. The helical transmembrane segment at 281–301 (TVSRCMPAGILIGVVVLIFSL) threads the bilayer. At 302–304 (QHE) the chain is on the periplasmic side. A helical transmembrane segment spans residues 305–325 (LLPAYALLMLIGVLGGFFVVP). The Cytoplasmic segment spans residues 326 to 343 (LNALLQERGKKSVGAGNA). The helical transmembrane segment at 344 to 364 (IAVQNLGENSAMLLMLGIYSL) threads the bilayer. Residues 365–366 (AV) are Periplasmic-facing. The helical transmembrane segment at 367 to 387 (MVGIPVVPIGIGFGALFALAI) threads the bilayer. Residues 388 to 397 (TALWIWQRRH) are Cytoplasmic-facing.

Belongs to the major facilitator superfamily. LplT (TC 2.A.1.42) family.

The protein localises to the cell inner membrane. Catalyzes the facilitated diffusion of 2-acyl-glycero-3-phosphoethanolamine (2-acyl-GPE) into the cell. The sequence is that of Lysophospholipid transporter LplT from Escherichia coli (strain SMS-3-5 / SECEC).